The primary structure comprises 68 residues: DNA-directed RNA polymerase subunit Rpo10 (68 aa).

Zn(2+) contacts are provided by cysteine 7, cysteine 10, cysteine 44, and cysteine 45.

The protein belongs to the archaeal Rpo10/eukaryotic RPB10 RNA polymerase subunit family. As to quaternary structure, part of the RNA polymerase complex. The cofactor is Zn(2+).

The protein resides in the cytoplasm. It carries out the reaction RNA(n) + a ribonucleoside 5'-triphosphate = RNA(n+1) + diphosphate. DNA-dependent RNA polymerase (RNAP) catalyzes the transcription of DNA into RNA using the four ribonucleoside triphosphates as substrates. The polypeptide is DNA-directed RNA polymerase subunit Rpo10 (Methanococcus vannielii (strain ATCC 35089 / DSM 1224 / JCM 13029 / OCM 148 / SB)).